Here is a 701-residue protein sequence, read N- to C-terminus: Elongation factor G (701 aa).

One can recognise a tr-type G domain in the interval 8-290 (KHYRNIGISA…AVIEYLPAPI (283 aa)). GTP-binding positions include 17 to 24 (AHIDAGKT), 88 to 92 (DTPGH), and 142 to 145 (NKMD).

It belongs to the TRAFAC class translation factor GTPase superfamily. Classic translation factor GTPase family. EF-G/EF-2 subfamily.

It is found in the cytoplasm. Catalyzes the GTP-dependent ribosomal translocation step during translation elongation. During this step, the ribosome changes from the pre-translocational (PRE) to the post-translocational (POST) state as the newly formed A-site-bound peptidyl-tRNA and P-site-bound deacylated tRNA move to the P and E sites, respectively. Catalyzes the coordinated movement of the two tRNA molecules, the mRNA and conformational changes in the ribosome. The chain is Elongation factor G from Hamiltonella defensa subsp. Acyrthosiphon pisum (strain 5AT).